The following is a 447-amino-acid chain: tRNA(Ile)-lysidine synthase (447 aa).

Residue Ser-31–Ser-36 coordinates ATP.

The protein belongs to the tRNA(Ile)-lysidine synthase family.

It is found in the cytoplasm. It carries out the reaction cytidine(34) in tRNA(Ile2) + L-lysine + ATP = lysidine(34) in tRNA(Ile2) + AMP + diphosphate + H(+). In terms of biological role, ligates lysine onto the cytidine present at position 34 of the AUA codon-specific tRNA(Ile) that contains the anticodon CAU, in an ATP-dependent manner. Cytidine is converted to lysidine, thus changing the amino acid specificity of the tRNA from methionine to isoleucine. The sequence is that of tRNA(Ile)-lysidine synthase from Pseudothermotoga lettingae (strain ATCC BAA-301 / DSM 14385 / NBRC 107922 / TMO) (Thermotoga lettingae).